The primary structure comprises 409 residues: Small ribosomal subunit protein mS47 (409 aa).

A mitochondrion-targeting transit peptide spans 1–26; sequence MQTVKALRRVSEPLQWVRSVSYGRRF. The interval 388 to 409 is disordered; that stretch reads ASELDDSDSELKLPTAQREPYF.

It belongs to the enoyl-CoA hydratase/isomerase family. Mitochondrion-specific ribosomal protein mS47 subfamily. As to quaternary structure, component of the mitochondrial ribosome small subunit.

The protein resides in the mitochondrion. This chain is Small ribosomal subunit protein mS47, found in Arabidopsis thaliana (Mouse-ear cress).